We begin with the raw amino-acid sequence, 994 residues long: Valine--tRNA ligase (994 aa).

Positions 43–53 match the 'HIGH' region motif; that stretch reads PNVTGTLHMGH. The segment covering 329-345 has biased composition (polar residues); it reads QSGMPSGATSDTTNTPS. Residues 329–355 are disordered; the sequence is QSGMPSGATSDTTNTPSDPEASSAANQ. The 'KMSKS' region signature appears at 585-589; sequence KMSKS. Lys-588 lines the ATP pocket. Residues 692–714 are disordered; sequence AHSPAQHQAGQDGQDAPRTPQPR. Low complexity predominate over residues 696–707; the sequence is AQHQAGQDGQDA. Positions 928–994 form a coiled coil; the sequence is LIDVDAERVR…NGLRERRATL (67 aa).

The protein belongs to the class-I aminoacyl-tRNA synthetase family. ValS type 1 subfamily. In terms of assembly, monomer.

The protein resides in the cytoplasm. The enzyme catalyses tRNA(Val) + L-valine + ATP = L-valyl-tRNA(Val) + AMP + diphosphate. Its function is as follows. Catalyzes the attachment of valine to tRNA(Val). As ValRS can inadvertently accommodate and process structurally similar amino acids such as threonine, to avoid such errors, it has a 'posttransfer' editing activity that hydrolyzes mischarged Thr-tRNA(Val) in a tRNA-dependent manner. The sequence is that of Valine--tRNA ligase from Xylella fastidiosa (strain 9a5c).